The primary structure comprises 505 residues: Glutamyl-tRNA(Gln) amidotransferase subunit A, mitochondrial (505 aa).

Residues K76 and S158 each act as charge relay system in the active site. Residue S182 is the Acyl-ester intermediate of the active site.

The protein belongs to the amidase family. GatA subfamily. As to quaternary structure, subunit of the heterotrimeric GatCAB amidotransferase (AdT) complex, composed of A, B and C subunits.

It localises to the mitochondrion. It catalyses the reaction L-glutamyl-tRNA(Gln) + L-glutamine + ATP + H2O = L-glutaminyl-tRNA(Gln) + L-glutamate + ADP + phosphate + H(+). Its function is as follows. Allows the formation of correctly charged Gln-tRNA(Gln) through the transamidation of misacylated Glu-tRNA(Gln) in the mitochondria. The reaction takes place in the presence of glutamine and ATP through an activated gamma-phospho-Glu-tRNA(Gln). The sequence is that of Glutamyl-tRNA(Gln) amidotransferase subunit A, mitochondrial from Ixodes scapularis (Black-legged tick).